Here is a 131-residue protein sequence, read N- to C-terminus: MANSRRVSKVSSLIKREVSLMLMQDIKDDRVGAGMVSITEVEVSGDLQHAKIFVSIYGSEEARAETMEGLRASQGFVRRTLGQRIRLRRSPEVLFIEDRSLEEGDRMIHLINQLEIKDPEELEAQESEEMV.

Belongs to the RbfA family. Monomer. Binds 30S ribosomal subunits, but not 50S ribosomal subunits or 70S ribosomes.

Its subcellular location is the cytoplasm. One of several proteins that assist in the late maturation steps of the functional core of the 30S ribosomal subunit. Associates with free 30S ribosomal subunits (but not with 30S subunits that are part of 70S ribosomes or polysomes). Required for efficient processing of 16S rRNA. May interact with the 5'-terminal helix region of 16S rRNA. The chain is Ribosome-binding factor A from Picosynechococcus sp. (strain ATCC 27264 / PCC 7002 / PR-6) (Agmenellum quadruplicatum).